We begin with the raw amino-acid sequence, 259 residues long: Probable ABC transporter permease protein RP096 (259 aa).

A run of 5 helical transmembrane segments spans residues 13–35, 49–69, 148–168, 195–215, and 237–257; these read TIKF…SSII, LFIG…SGAV, VIAA…IGVM, PIDV…ISII, and AVVN…ELFF.

It belongs to the MlaE permease family.

It is found in the cell inner membrane. Functionally, could be part of an ABC transporter complex. The chain is Probable ABC transporter permease protein RP096 from Rickettsia prowazekii (strain Madrid E).